We begin with the raw amino-acid sequence, 277 residues long: Glycerol-3-phosphate acyltransferase (277 aa).

A run of 5 helical transmembrane segments spans residues 3 to 23 (FFIF…AIIV), 55 to 75 (IMVM…AKLL), 79 to 99 (PVTV…PVFF), 111 to 131 (IGAL…TWLL), and 155 to 175 (LILV…ILVL). A disordered region spans residues 231-277 (KTEQAEAVKKPKAKKATTKAKKTTSKEETAKKPKSTKPKTKTVKEKE). Basic residues-rich tracts occupy residues 240-253 (KPKA…AKKT) and 262-271 (KPKSTKPKTK).

Belongs to the PlsY family. As to quaternary structure, probably interacts with PlsX.

Its subcellular location is the cell inner membrane. It carries out the reaction an acyl phosphate + sn-glycerol 3-phosphate = a 1-acyl-sn-glycero-3-phosphate + phosphate. It functions in the pathway lipid metabolism; phospholipid metabolism. Its function is as follows. Catalyzes the transfer of an acyl group from acyl-phosphate (acyl-PO(4)) to glycerol-3-phosphate (G3P) to form lysophosphatidic acid (LPA). This enzyme utilizes acyl-phosphate as fatty acyl donor, but not acyl-CoA or acyl-ACP. The chain is Glycerol-3-phosphate acyltransferase from Legionella pneumophila (strain Lens).